We begin with the raw amino-acid sequence, 311 residues long: Probable acetylxylan esterase A (311 aa).

The signal sequence occupies residues 1–19; sequence MAPFSFILTVLLYALTCSA. Ser153 serves as the catalytic Charge relay system. N-linked (GlcNAc...) asparagine glycosylation is found at Asn197 and Asn224.

It belongs to the carbohydrate esterase 1 (CE1) family. AxeA subfamily. Monomer.

The protein resides in the secreted. It carries out the reaction Deacetylation of xylans and xylo-oligosaccharides.. Its pathway is glycan degradation; xylan degradation. In terms of biological role, acetylxylan esterase involved in the hydrolysis of xylan, a major structural heterogeneous polysaccharide found in plant biomass representing the second most abundant polysaccharide in the biosphere, after cellulose. Degrades acetylated xylans by cleaving acetyl side groups from the hetero-xylan backbone. The protein is Probable acetylxylan esterase A (axeA) of Aspergillus terreus (strain NIH 2624 / FGSC A1156).